A 428-amino-acid chain; its full sequence is Putative UPF0496 protein 5 (428 aa).

Over residues 1-14 (MGNRHGIMRPRRLA) the composition is skewed to basic residues. Positions 1 to 40 (MGNRHGIMRPRRLASGRSAAAAEEEGEDGEGEPGSYEAAC) are disordered. The segment covering 22–31 (AEEEGEDGEG) has biased composition (acidic residues). Helical transmembrane passes span 229–249 (IVFL…AAIA) and 252–272 (PVAA…GKWM).

It belongs to the UPF0496 family.

It is found in the membrane. This is Putative UPF0496 protein 5 from Oryza sativa subsp. indica (Rice).